Reading from the N-terminus, the 56-residue chain is Single-pass membrane and coiled-coil domain-containing protein 4 homolog (56 aa).

Residues 1–27 (MRQLPGKAAKETRKMKRERKQQNKEGH) are disordered. Residues 9–31 (AKETRKMKRERKQQNKEGHNRVV) are a coiled coil. Residues 30 to 50 (VVTVAIPVCLAVFVMLIVYVY) traverse the membrane as a helical segment.

This sequence belongs to the SMCO4 family.

The protein localises to the membrane. This Nematostella vectensis (Starlet sea anemone) protein is Single-pass membrane and coiled-coil domain-containing protein 4 homolog.